Consider the following 119-residue polypeptide: Large ribosomal subunit protein uL18 (119 aa).

Belongs to the universal ribosomal protein uL18 family. In terms of assembly, part of the 50S ribosomal subunit; part of the 5S rRNA/L5/L18/L25 subcomplex. Contacts the 5S and 23S rRNAs.

This is one of the proteins that bind and probably mediate the attachment of the 5S RNA into the large ribosomal subunit, where it forms part of the central protuberance. This is Large ribosomal subunit protein uL18 from Clostridium botulinum (strain 657 / Type Ba4).